The chain runs to 368 residues: Cytochrome b (368 aa).

Helical transmembrane passes span 33-53, 77-99, 112-132, and 178-198; these read FGSL…FLAM, WLIR…THTG, TWMV…LGYV, and FYAL…MHII. The heme b site is built by H83 and H97. Heme b-binding residues include H182 and H196. H201 is an a ubiquinone binding site. Helical transmembrane passes span 224-244, 288-308, 323-343, and 345-365; these read FSAK…SVVL, LGGV…PMMN, IAFW…SKPV, and SPFE…YMIM.

The protein belongs to the cytochrome b family. In terms of assembly, the main subunits of complex b-c1 are: cytochrome b, cytochrome c1 and the Rieske protein. Requires heme b as cofactor.

It localises to the mitochondrion inner membrane. Its function is as follows. Component of the ubiquinol-cytochrome c reductase complex (complex III or cytochrome b-c1 complex) that is part of the mitochondrial respiratory chain. The b-c1 complex mediates electron transfer from ubiquinol to cytochrome c. Contributes to the generation of a proton gradient across the mitochondrial membrane that is then used for ATP synthesis. In Bugula neritina (Brown bryozoan), this protein is Cytochrome b (mt:Cyt-b).